A 158-amino-acid polypeptide reads, in one-letter code: MSGIALSRLAQERKAWRKDHPLGLVAVPTKNPDGTMNLMNGECAIPGKKGTPWEGGLFKLRMLFKDDYPSSPPKCKFEPPLFHPNVYPSGTVCLSILEEDKDWRPAITIKQILLGIQELLNEPNIQDPAQAEAYTIFCQDRTEYEKRVRAQAKKFSPS.

Residues 4 to 157 (IALSRLAQER…VRAQAKKFSP (154 aa)) form the UBC core domain. Residues 13-18 (RKAWRK) are interaction with sumo1. C93 acts as the Glycyl thioester intermediate in catalysis.

The protein belongs to the ubiquitin-conjugating enzyme family. As to quaternary structure, forms a tight complex with RANGAP1 and RANBP2.

It is found in the nucleus. The protein operates within protein modification; protein sumoylation. Functionally, accepts the ubiquitin-like proteins SUMO1, SUMO2 and SUMO3 from the UBLE1A-UBLE1B E1 complex and catalyzes their covalent attachment to other proteins with the help of an E3 ligase such as RANBP2 or CBX4. Essential for nuclear architecture and chromosome segregation. The chain is SUMO-conjugating enzyme UBC9 (ube2i) from Pagrus major (Red sea bream).